The following is a 21-amino-acid chain: Nigrocin-2JDa (21 aa).

Residues C15 and C21 are joined by a disulfide bond.

As to expression, expressed by the skin glands.

It localises to the secreted. Functionally, has antibacterial activity against E.coli ATCC 25992 (MIC=16 uM), E.coli CIB 84492 (MIC=16 uM), S.aureus ATCC 25923 (MIC=16 uM) and S.aureus CIB 85462 (MIC=8 uM). Has antifungal activity against C.albicans (MIC=63 uM). Has hemolytic activity against rabbit erythrocytes. This is Nigrocin-2JDa from Odorrana jingdongensis (Jingdong frog).